The following is a 419-amino-acid chain: [Butirosin acyl-carrier protein]--L-glutamate ligase (419 aa).

The region spanning 144 to 345 (RRLMERNGFN…FVESRVLVFN (202 aa)) is the ATP-grasp domain. An ATP-binding site is contributed by 174–231 (ISAGFSKCVLKVPYGSSGKGLKVIDNERNFRFLLNYIQNRQTNVDLLLEGWHPHRLSL). Mg(2+) contacts are provided by D298, E312, and N314. Mn(2+) is bound by residues D298, E312, and N314.

In terms of assembly, monomer. The cofactor is Mg(2+). Mn(2+) serves as cofactor.

It catalyses the reaction holo-[BtrI ACP] + L-glutamate + ATP = gamma-L-glutamyl-[BtrI ACP] + ADP + phosphate. The catalysed reaction is 4-aminobutanoyl-[BtrI ACP] + L-glutamate + ATP = 4-(gamma-L-glutamylamino)butanoyl-[BtrI ACP] + ADP + phosphate + H(+). It participates in antibiotic biosynthesis; butirosin biosynthesis. Functionally, ATP-dependent ligase that catalyzes 2 steps in the biosynthesis of the side chain of the aminoglycoside antibiotics in the biosynthetic pathway of butirosin. Mediates the addition of one molecule of L-glutamate to a dedicated acyl-carrier protein. Following decarboxylation of the product by BtrK, adds a second L-glutamate molecule. This chain is [Butirosin acyl-carrier protein]--L-glutamate ligase (btrJ), found in Niallia circulans (Bacillus circulans).